The following is an 898-amino-acid chain: Magnesium-transporting ATPase, P-type 1 (898 aa).

Over 1 to 94 (MFKEIFTRLI…QPSPWWVHLW (94 aa)) the chain is Cytoplasmic. Residues 95-115 (VCYRNPFNILLTILGAISYAT) form a helical membrane-spanning segment. Residue Glu116 is a topological domain, extracellular. A helical membrane pass occupies residues 117-137 (DLFAAGVIALMVAISTLLNFI). Topologically, residues 138–287 (QEARSTKAAD…PNAFQQGISR (150 aa)) are cytoplasmic. Residues 288–308 (VSMLLIRFMLVMAPVVLLING) traverse the membrane as a helical segment. Residues 309-317 (YTKGDWWEA) are Extracellular-facing. A helical membrane pass occupies residues 318–335 (ALFALSVAVGLTPEMLPM). Mg(2+) is bound at residue Glu331. The Cytoplasmic portion of the chain corresponds to 336 to 695 (IVTSTLARGA…IEGRRTFANM (360 aa)). Asp373 (4-aspartylphosphate intermediate) is an active-site residue. Residues Asp641, Asp645, and Asn709 each contribute to the Mg(2+) site. Residues 696-715 (LKYIKMTASSNFGNVFSVLV) form a helical membrane-spanning segment. Over 716–724 (ASAFLPFLP) the chain is Extracellular. A helical transmembrane segment spans residues 725 to 744 (MLPLHLLIQNLLYDVSQVAI). Residues Asn734 and Asp738 each coordinate Mg(2+). The Cytoplasmic segment spans residues 745 to 766 (PFDNVDDEQIQKPQRWNPADLG). A helical membrane pass occupies residues 767–790 (RFMIFFGPISSIFDILTFCLMWWV). The Extracellular portion of the chain corresponds to 791–799 (FHANTPETQ). Residues 800 to 818 (TLFQSGWFVVGLLSQTLIV) form a helical membrane-spanning segment. Over 819–831 (HMIRTRRVPFIQS) the chain is Cytoplasmic. A helical membrane pass occupies residues 832–851 (CASWPLMIMTVIVMIVGIAL). The Extracellular portion of the chain corresponds to 852 to 866 (PFSPLASYLQLQALP). Residues 867-886 (LSYFPWLVAILAGYMTLTQL) form a helical membrane-spanning segment. Residues 887–898 (VKGFYSRRYGWQ) are Cytoplasmic-facing.

This sequence belongs to the cation transport ATPase (P-type) (TC 3.A.3) family. Type IIIB subfamily.

It localises to the cell inner membrane. The enzyme catalyses Mg(2+)(out) + ATP + H2O = Mg(2+)(in) + ADP + phosphate + H(+). Its function is as follows. Mediates magnesium influx to the cytosol. This chain is Magnesium-transporting ATPase, P-type 1 (mgtA), found in Escherichia coli O157:H7.